A 176-amino-acid chain; its full sequence is Viral interleukin-10 homolog (176 aa).

Residues 1 to 25 (MLSVMVSSSLVLIVFFLGASEEAKP) form the signal peptide. Disulfide bonds link Cys-38/Cys-128 and Cys-82/Cys-133. An N-linked (GlcNAc...) asparagine; by host glycan is attached at Asn-152.

The protein belongs to the IL-10 family. In terms of assembly, homodimer; disulfide-linked.

The protein localises to the secreted. In terms of biological role, functional viral IL-10 homolog. Can bind to the human IL-10 receptor and compete with human IL-10 for binding sites. Requires both subunits of the human IL-10 receptor complex to induce signal transduction events and biological activities. IL-10 signaling pathway has several immunosuppressive activities that are exploited by the virus. Inhibits TLR-induced type I interferon production in host plasmacytoid dendritic cells. The protein is Viral interleukin-10 homolog (UL111A) of Homo sapiens (Human).